The following is a 151-amino-acid chain: uncharacterized protein (151 aa).

Residues 48-151 (RPPGWQPPVN…SKFDHTRKKF (104 aa)) form a disordered region. Over residues 55-77 (PVNTGPTSPVSINASNAAPSNLK) the composition is skewed to polar residues. Composition is skewed to low complexity over residues 85–105 (PRRL…RLPS) and 123–141 (KSPS…SLLR).

This is an uncharacterized protein from Schizosaccharomyces pombe (strain 972 / ATCC 24843) (Fission yeast).